Here is a 297-residue protein sequence, read N- to C-terminus: Tyrosine recombinase XerD (297 aa).

A Core-binding (CB) domain is found at 2 to 86 (KKLDPIIEQF…CLRKFFRFLC (85 aa)). The 185-residue stretch at 107–291 (QLPKSLSEEQ…AKTRLKSIHK (185 aa)) folds into the Tyr recombinase domain. Residues Arg147, Lys171, His243, Arg246, and His269 contribute to the active site. The O-(3'-phospho-DNA)-tyrosine intermediate role is filled by Tyr278.

The protein belongs to the 'phage' integrase family. XerD subfamily. As to quaternary structure, forms a cyclic heterotetrameric complex composed of two molecules of XerC and two molecules of XerD.

It localises to the cytoplasm. Functionally, site-specific tyrosine recombinase, which acts by catalyzing the cutting and rejoining of the recombining DNA molecules. The XerC-XerD complex is essential to convert dimers of the bacterial chromosome into monomers to permit their segregation at cell division. It also contributes to the segregational stability of plasmids. In Haemophilus ducreyi (strain 35000HP / ATCC 700724), this protein is Tyrosine recombinase XerD.